A 179-amino-acid chain; its full sequence is Large ribosomal subunit protein uL5 (179 aa).

The protein belongs to the universal ribosomal protein uL5 family. In terms of assembly, part of the 50S ribosomal subunit; part of the 5S rRNA/L5/L18/L25 subcomplex. Contacts the 5S rRNA and the P site tRNA. Forms a bridge to the 30S subunit in the 70S ribosome.

Functionally, this is one of the proteins that bind and probably mediate the attachment of the 5S RNA into the large ribosomal subunit, where it forms part of the central protuberance. In the 70S ribosome it contacts protein S13 of the 30S subunit (bridge B1b), connecting the 2 subunits; this bridge is implicated in subunit movement. Contacts the P site tRNA; the 5S rRNA and some of its associated proteins might help stabilize positioning of ribosome-bound tRNAs. This chain is Large ribosomal subunit protein uL5, found in Buchnera aphidicola subsp. Acyrthosiphon kondoi (Acyrthosiphon kondoi symbiotic bacterium).